Reading from the N-terminus, the 418-residue chain is Putative methylthiotransferase HP_0285 (418 aa).

The MTTase N-terminal domain maps to 2–110 (KKVYFKTFGC…INALLQEKKR (109 aa)). The [4Fe-4S] cluster site is built by Cys11, Cys45, Cys74, Cys144, Cys148, and Cys151. The region spanning 130 to 355 (FVGKTRAFIK…KDLIFHKNKA (226 aa)) is the Radical SAM core domain.

The protein belongs to the methylthiotransferase family. The cofactor is [4Fe-4S] cluster.

This is Putative methylthiotransferase HP_0285 from Helicobacter pylori (strain ATCC 700392 / 26695) (Campylobacter pylori).